Here is a 389-residue protein sequence, read N- to C-terminus: tRNA-specific 2-thiouridylase MnmA (389 aa).

ATP is bound by residues Ala21–Ser28 and Leu47. Cys115 acts as the Nucleophile in catalysis. Residues Cys115 and Cys212 are joined by a disulfide bond. Gly139 contributes to the ATP binding site. An interaction with tRNA region spans residues Arg162–Gln164. The active-site Cysteine persulfide intermediate is the Cys212.

The protein belongs to the MnmA/TRMU family.

The protein resides in the cytoplasm. The enzyme catalyses S-sulfanyl-L-cysteinyl-[protein] + uridine(34) in tRNA + AH2 + ATP = 2-thiouridine(34) in tRNA + L-cysteinyl-[protein] + A + AMP + diphosphate + H(+). Catalyzes the 2-thiolation of uridine at the wobble position (U34) of tRNA, leading to the formation of s(2)U34. This is tRNA-specific 2-thiouridylase MnmA from Xanthobacter autotrophicus (strain ATCC BAA-1158 / Py2).